The chain runs to 429 residues: Enolase (429 aa).

Residue Gln164 participates in (2R)-2-phosphoglycerate binding. Glu206 functions as the Proton donor in the catalytic mechanism. 3 residues coordinate Mg(2+): Asp243, Glu286, and Asp313. Positions 338, 367, 368, and 389 each coordinate (2R)-2-phosphoglycerate. The active-site Proton acceptor is the Lys338.

The protein belongs to the enolase family. Requires Mg(2+) as cofactor.

Its subcellular location is the cytoplasm. It localises to the secreted. The protein localises to the cell surface. It catalyses the reaction (2R)-2-phosphoglycerate = phosphoenolpyruvate + H2O. It participates in carbohydrate degradation; glycolysis; pyruvate from D-glyceraldehyde 3-phosphate: step 4/5. Its function is as follows. Catalyzes the reversible conversion of 2-phosphoglycerate (2-PG) into phosphoenolpyruvate (PEP). It is essential for the degradation of carbohydrates via glycolysis. This is Enolase from Thermotoga sp. (strain RQ2).